We begin with the raw amino-acid sequence, 340 residues long: Holliday junction branch migration complex subunit RuvB (340 aa).

The segment at 1 to 182 (MSDIDPTVRA…FGIPTRLQFY (182 aa)) is large ATPase domain (RuvB-L). ATP is bound by residues leucine 21, arginine 22, glycine 63, lysine 66, threonine 67, threonine 68, 129–131 (EDF), arginine 172, tyrosine 182, and arginine 219. Threonine 67 provides a ligand contact to Mg(2+). The segment at 183 to 253 (TEDELFIIVD…LADMALNRLG (71 aa)) is small ATPAse domain (RuvB-S). A head domain (RuvB-H) region spans residues 256–340 (HLGLDGADRR…PRAQTDLFEG (85 aa)). Arginine 292, arginine 311, and arginine 316 together coordinate DNA.

Belongs to the RuvB family. Homohexamer. Forms an RuvA(8)-RuvB(12)-Holliday junction (HJ) complex. HJ DNA is sandwiched between 2 RuvA tetramers; dsDNA enters through RuvA and exits via RuvB. An RuvB hexamer assembles on each DNA strand where it exits the tetramer. Each RuvB hexamer is contacted by two RuvA subunits (via domain III) on 2 adjacent RuvB subunits; this complex drives branch migration. In the full resolvosome a probable DNA-RuvA(4)-RuvB(12)-RuvC(2) complex forms which resolves the HJ.

It is found in the cytoplasm. The catalysed reaction is ATP + H2O = ADP + phosphate + H(+). In terms of biological role, the RuvA-RuvB-RuvC complex processes Holliday junction (HJ) DNA during genetic recombination and DNA repair, while the RuvA-RuvB complex plays an important role in the rescue of blocked DNA replication forks via replication fork reversal (RFR). RuvA specifically binds to HJ cruciform DNA, conferring on it an open structure. The RuvB hexamer acts as an ATP-dependent pump, pulling dsDNA into and through the RuvAB complex. RuvB forms 2 homohexamers on either side of HJ DNA bound by 1 or 2 RuvA tetramers; 4 subunits per hexamer contact DNA at a time. Coordinated motions by a converter formed by DNA-disengaged RuvB subunits stimulates ATP hydrolysis and nucleotide exchange. Immobilization of the converter enables RuvB to convert the ATP-contained energy into a lever motion, pulling 2 nucleotides of DNA out of the RuvA tetramer per ATP hydrolyzed, thus driving DNA branch migration. The RuvB motors rotate together with the DNA substrate, which together with the progressing nucleotide cycle form the mechanistic basis for DNA recombination by continuous HJ branch migration. Branch migration allows RuvC to scan DNA until it finds its consensus sequence, where it cleaves and resolves cruciform DNA. In Roseobacter denitrificans (strain ATCC 33942 / OCh 114) (Erythrobacter sp. (strain OCh 114)), this protein is Holliday junction branch migration complex subunit RuvB.